The primary structure comprises 419 residues: UDP-N-acetylglucosamine 1-carboxyvinyltransferase 2 (419 aa).

24–25 (KN) is a phosphoenolpyruvate binding site. R94 contacts UDP-N-acetyl-alpha-D-glucosamine. Catalysis depends on C118, which acts as the Proton donor. C118 is modified (2-(S-cysteinyl)pyruvic acid O-phosphothioketal). Residues 123 to 127 (RPIDQ), D307, and I329 contribute to the UDP-N-acetyl-alpha-D-glucosamine site.

The protein belongs to the EPSP synthase family. MurA subfamily.

The protein resides in the cytoplasm. It catalyses the reaction phosphoenolpyruvate + UDP-N-acetyl-alpha-D-glucosamine = UDP-N-acetyl-3-O-(1-carboxyvinyl)-alpha-D-glucosamine + phosphate. It functions in the pathway cell wall biogenesis; peptidoglycan biosynthesis. Its function is as follows. Cell wall formation. Adds enolpyruvyl to UDP-N-acetylglucosamine. The sequence is that of UDP-N-acetylglucosamine 1-carboxyvinyltransferase 2 from Staphylococcus aureus (strain MRSA252).